The primary structure comprises 358 residues: Phosphoribosylformylglycinamidine cyclo-ligase (358 aa).

The protein belongs to the AIR synthase family.

It is found in the cytoplasm. It carries out the reaction 2-formamido-N(1)-(5-O-phospho-beta-D-ribosyl)acetamidine + ATP = 5-amino-1-(5-phospho-beta-D-ribosyl)imidazole + ADP + phosphate + H(+). It functions in the pathway purine metabolism; IMP biosynthesis via de novo pathway; 5-amino-1-(5-phospho-D-ribosyl)imidazole from N(2)-formyl-N(1)-(5-phospho-D-ribosyl)glycinamide: step 2/2. The chain is Phosphoribosylformylglycinamidine cyclo-ligase from Nitrosococcus oceani (strain ATCC 19707 / BCRC 17464 / JCM 30415 / NCIMB 11848 / C-107).